Reading from the N-terminus, the 208-residue chain is Holliday junction resolvase RecU (208 aa).

The disordered stretch occupies residues 1–25; that stretch reads MNYPNGKPFNRNKTKVGRTNDHKSS. Positions 87, 89, 102, and 121 each coordinate Mg(2+).

It belongs to the RecU family. Mg(2+) serves as cofactor.

It localises to the cytoplasm. The catalysed reaction is Endonucleolytic cleavage at a junction such as a reciprocal single-stranded crossover between two homologous DNA duplexes (Holliday junction).. Endonuclease that resolves Holliday junction intermediates in genetic recombination. Cleaves mobile four-strand junctions by introducing symmetrical nicks in paired strands. Promotes annealing of linear ssDNA with homologous dsDNA. Required for DNA repair, homologous recombination and chromosome segregation. The chain is Holliday junction resolvase RecU from Staphylococcus carnosus (strain TM300).